A 264-amino-acid chain; its full sequence is 3-methyl-2-oxobutanoate hydroxymethyltransferase (264 aa).

D45 and D84 together coordinate Mg(2+). 3-methyl-2-oxobutanoate-binding positions include 45–46 (DS), D84, and K113. A Mg(2+)-binding site is contributed by E115. E182 acts as the Proton acceptor in catalysis.

The protein belongs to the PanB family. As to quaternary structure, homodecamer; pentamer of dimers. It depends on Mg(2+) as a cofactor.

Its subcellular location is the cytoplasm. It carries out the reaction 3-methyl-2-oxobutanoate + (6R)-5,10-methylene-5,6,7,8-tetrahydrofolate + H2O = 2-dehydropantoate + (6S)-5,6,7,8-tetrahydrofolate. Its pathway is cofactor biosynthesis; (R)-pantothenate biosynthesis; (R)-pantoate from 3-methyl-2-oxobutanoate: step 1/2. Functionally, catalyzes the reversible reaction in which hydroxymethyl group from 5,10-methylenetetrahydrofolate is transferred onto alpha-ketoisovalerate to form ketopantoate. The sequence is that of 3-methyl-2-oxobutanoate hydroxymethyltransferase from Caldicellulosiruptor saccharolyticus (strain ATCC 43494 / DSM 8903 / Tp8T 6331).